The sequence spans 556 residues: 2-methylpropanoate--CoA ligase CCL4 (556 aa).

Residues 192 to 200 (TSGTTSSPK), 325 to 330 (HGYGLT), Asp423, 435 to 438 (IKDR), and Lys531 each bind ATP. The interval 260 to 325 (DSEIIYDMIK…TESLGFAVSH (66 aa)) is SBD1. Residues 326–402 (GYGLTETAGL…LRGGSVMLGY (77 aa)) form an SBD2 region.

Belongs to the ATP-dependent AMP-binding enzyme family. Mostly expressed in old leaves and in cones and glandular trichomes (lupulin glands) after flowering, and, to a lower extent, in stems, young leaves and flowers.

The protein resides in the cytoplasm. It is found in the cytosol. The catalysed reaction is 2-methylpropanoate + ATP + CoA = 2-methylpropanoyl-CoA + AMP + diphosphate. It carries out the reaction propanoate + ATP + CoA = propanoyl-CoA + AMP + diphosphate. It catalyses the reaction butanoate + ATP + CoA = butanoyl-CoA + AMP + diphosphate. The enzyme catalyses 2-methylbutanoate + ATP + CoA = 2-methylbutanoyl-CoA + AMP + diphosphate. It functions in the pathway secondary metabolite biosynthesis. In terms of biological role, involved in the biosynthesis of prenylated phenolics natural products which contribute to the bitter taste of beer and display broad biological activities. Catalyzes the ligation of CoA on 2-methylpropanoate (isobutyric acid) and 2-methylbutanoate to produce 2-methylpropanoyl-CoA and 2-methylbutanoyl-CoA, respectively. Can also use propanoate and butanoate as substrates with a lower efficiency. This Humulus lupulus (European hop) protein is 2-methylpropanoate--CoA ligase CCL4.